The primary structure comprises 1401 residues: Uveal autoantigen with coiled-coil domains and ankyrin repeats protein (1401 aa).

ANK repeat units follow at residues 25-53, 54-83, 87-116, 120-149, 153-182, and 186-215; these read LMRA…KLDV, EGRS…DITT, AGRN…PTEH, QGRT…SVNA, DGRT…DINS, and QNRT…DVTL. At Ser-265 the chain carries Phosphoserine. 3 coiled-coil regions span residues 273–361, 423–827, and 856–1368; these read TKSN…SRFK, ENEI…EKIY, and ALSS…VIAI. Residue Lys-1020 forms a Glycyl lysine isopeptide (Lys-Gly) (interchain with G-Cter in SUMO2) linkage.

As to quaternary structure, component of the apoptosome complex, composed of APAF1, pro-caspase-9 and UACA. In the complex, it probably interacts directly with APAF1. Interacts with LGALS3. Interacts with ARF6 and ACTB. Interacts with RAB39A. As to expression, highly expressed in muscle and heart, moderately in liver, kidney and pancreas, and weakly in placenta and lung.

The protein resides in the nucleus. Its subcellular location is the cytoplasm. The protein localises to the cytoskeleton. Functionally, regulates APAF1 expression and plays an important role in the regulation of stress-induced apoptosis. Promotes apoptosis by regulating three pathways, apoptosome up-regulation, LGALS3/galectin-3 down-regulation and NF-kappa-B inactivation. Regulates the redistribution of APAF1 into the nucleus after proapoptotic stress. Down-regulates the expression of LGALS3 by inhibiting NFKB1. Its function is as follows. Modulates isoactin dynamics to regulate the morphological alterations required for cell growth and motility. Interaction with ARF6 may modulate cell shape and motility after injury. May be involved in multiple neurite formation. The protein is Uveal autoantigen with coiled-coil domains and ankyrin repeats protein (UACA) of Bos taurus (Bovine).